The following is a 434-amino-acid chain: MTQMLEAMRGNITEAMKTVAADEKLDPEYIRKMVAKGYIAIPDNNQRETVAVGIGENLRTKVNATIGTSTDINDLDMELEKAKIAEEAGADTLMELSIGGDLDNIRRTVLKNTKKPVGSVPIYQTAVEAIEKDGSAINMDPDDMLKNIEKQAKDGIDFMAIHCSVNRETLKRLKRQGRNGGLVSRGGSFISSWMVHNDCENPLYENYDQVLDIVEEYDVCLSMANAMRAGALTDSTDRAQIQELIVLGELVDRARERGVQTIVEGPGHIPINEIETNINIQKKMCKNAPFYMLGPIVTDIAPAYDHIVSAIGAAQCARYGANFICYVTPAEHLALPGPEDVREGVIATRIGAHAGDLAIDLERFGEDDIAMAHARKSLNWTEQYEHAMWPADAKAIRDKRPPEADDTCTMCGNYCAIKIVNQWLDKADKDAFDN.

Substrate contacts are provided by residues M94, Y123, H162, 184-186 (SRG), 225-228 (NAMR), and E264. H268 contributes to the Zn(2+) binding site. Y291 contacts substrate. H332 lines the Zn(2+) pocket. [4Fe-4S] cluster-binding residues include C408, C411, and C415.

This sequence belongs to the ThiC family. It depends on [4Fe-4S] cluster as a cofactor.

It catalyses the reaction 5-amino-1-(5-phospho-beta-D-ribosyl)imidazole + S-adenosyl-L-methionine = 4-amino-2-methyl-5-(phosphooxymethyl)pyrimidine + CO + 5'-deoxyadenosine + formate + L-methionine + 3 H(+). It participates in cofactor biosynthesis; thiamine diphosphate biosynthesis. Its function is as follows. Catalyzes the synthesis of the hydroxymethylpyrimidine phosphate (HMP-P) moiety of thiamine from aminoimidazole ribotide (AIR) in a radical S-adenosyl-L-methionine (SAM)-dependent reaction. The chain is Phosphomethylpyrimidine synthase 2 from Methanosphaera stadtmanae (strain ATCC 43021 / DSM 3091 / JCM 11832 / MCB-3).